The following is a 511-amino-acid chain: 2,3-bisphosphoglycerate-independent phosphoglycerate mutase (511 aa).

Residues aspartate 14 and serine 64 each contribute to the Mn(2+) site. Serine 64 serves as the catalytic Phosphoserine intermediate. Substrate contacts are provided by residues histidine 125, 155–156 (RD), arginine 187, arginine 193, 259–262 (RADR), and lysine 333. Positions 400, 404, 441, 442, and 460 each coordinate Mn(2+).

Belongs to the BPG-independent phosphoglycerate mutase family. Monomer. Mn(2+) is required as a cofactor.

The enzyme catalyses (2R)-2-phosphoglycerate = (2R)-3-phosphoglycerate. It functions in the pathway carbohydrate degradation; glycolysis; pyruvate from D-glyceraldehyde 3-phosphate: step 3/5. Its function is as follows. Catalyzes the interconversion of 2-phosphoglycerate and 3-phosphoglycerate. The chain is 2,3-bisphosphoglycerate-independent phosphoglycerate mutase from Pseudomonas putida (strain ATCC 47054 / DSM 6125 / CFBP 8728 / NCIMB 11950 / KT2440).